A 98-amino-acid chain; its full sequence is NADH-ubiquinone oxidoreductase chain 4L (98 aa).

Helical transmembrane passes span 1 to 21, 29 to 49, and 61 to 81; these read MPFI…GLLI, SLLC…LMTL, and IVLL…LVLI.

Belongs to the complex I subunit 4L family. Core subunit of respiratory chain NADH dehydrogenase (Complex I) which is composed of 45 different subunits.

The protein localises to the mitochondrion inner membrane. The catalysed reaction is a ubiquinone + NADH + 5 H(+)(in) = a ubiquinol + NAD(+) + 4 H(+)(out). Core subunit of the mitochondrial membrane respiratory chain NADH dehydrogenase (Complex I) which catalyzes electron transfer from NADH through the respiratory chain, using ubiquinone as an electron acceptor. Part of the enzyme membrane arm which is embedded in the lipid bilayer and involved in proton translocation. This Aotus trivirgatus (Three-striped night monkey) protein is NADH-ubiquinone oxidoreductase chain 4L (MT-ND4L).